Here is a 258-residue protein sequence, read N- to C-terminus: 5'-nucleotidase SurE (258 aa).

A divalent metal cation is bound by residues D16, D17, S47, and N99.

This sequence belongs to the SurE nucleotidase family. The cofactor is a divalent metal cation.

The protein resides in the cytoplasm. It catalyses the reaction a ribonucleoside 5'-phosphate + H2O = a ribonucleoside + phosphate. In terms of biological role, nucleotidase that shows phosphatase activity on nucleoside 5'-monophosphates. This chain is 5'-nucleotidase SurE, found in Coxiella burnetii (strain CbuK_Q154) (Coxiella burnetii (strain Q154)).